The primary structure comprises 407 residues: uncharacterized protein (407 aa).

An EAL domain is found at 1–250 (MLDPLDILTN…LERDVLKQRL (250 aa)).

This is an uncharacterized protein from Bacillus subtilis (strain 168).